The primary structure comprises 78 residues: UPF0291 protein LBUL_1264 (78 aa).

The protein belongs to the UPF0291 family.

The protein resides in the cytoplasm. The chain is UPF0291 protein LBUL_1264 from Lactobacillus delbrueckii subsp. bulgaricus (strain ATCC BAA-365 / Lb-18).